A 1246-amino-acid chain; its full sequence is Stromal processing peptidase, chloroplastic (1246 aa).

A chloroplast-targeting transit peptide spans 1 to 136 (MASFPSPPLA…AKIRRRHVLH (136 aa)). A Zn(2+)-binding site is contributed by H228. The active-site Proton acceptor is the E231. H232 serves as a coordination point for Zn(2+). Residue E302 is part of the active site. E309 provides a ligand contact to Zn(2+).

Belongs to the peptidase M16 family. Requires Zn(2+) as cofactor. In terms of tissue distribution, widely expressed.

The protein resides in the plastid. Its subcellular location is the chloroplast stroma. Cleaves presequences (transit peptides) from chloroplastic protein precursors. Initially recognizes a precursor by binding to the C-terminus of its transit peptide and then removes the transit peptide in a single endoproteolytic step. In a next step, pursues the cleavage of transit peptide to a subfragment form. This chain is Stromal processing peptidase, chloroplastic, found in Oryza sativa subsp. indica (Rice).